The sequence spans 427 residues: Zinc finger protein 134 (427 aa).

Lys20 participates in a covalent cross-link: Glycyl lysine isopeptide (Lys-Gly) (interchain with G-Cter in SUMO2). The C2H2-type 1 zinc-finger motif lies at 50–72 (LPCDICGPILKDILHLDEHQGTH). The C2H2-type 2; degenerate zinc finger occupies 78–100 (HTCGACGRQFWFSANLHQYQKCY). Residues Lys135 and Lys139 each participate in a glycyl lysine isopeptide (Lys-Gly) (interchain with G-Cter in SUMO2) cross-link. C2H2-type zinc fingers lie at residues 176 to 198 (YKCSECGKAFSRKDTLVQHQRIH), 204 to 226 (YECSECGKAFSRKATLVQHQRIH), 232 to 254 (YECSECGKTFSRKDNLTQHKRIH), 260 to 282 (YKCNECGKYFSHHSNLIVHQRVH), 288 to 310 (YKCSDCGKVFRHKSTLVQHESIH), 316 to 338 (YDCSDCGKSFGHKYTLIKHQRIH), 344 to 366 (FECIECGKFFSRSSDYIAHQRVH), 372 to 394 (FVCSKCGKDFIRTSHLVRHQRVH), and 400 to 422 (YECSECGKAYSLSSHLNRHQKVH).

This sequence belongs to the krueppel C2H2-type zinc-finger protein family.

It is found in the nucleus. In terms of biological role, may be involved in transcriptional regulation. The chain is Zinc finger protein 134 (ZNF134) from Homo sapiens (Human).